We begin with the raw amino-acid sequence, 890 residues long: Probable LRR receptor-like serine/threonine-protein kinase At1g51860 (890 aa).

A signal peptide spans 1 to 23; it reads MKSLHWFLHLLIIAFTVLRSVEA. Residues 24–513 are Extracellular-facing; it reads QNQAGFISLD…KESKKVPMVA (490 aa). 13 N-linked (GlcNAc...) asparagine glycosylation sites follow: Asn-49, Asn-96, Asn-142, Asn-181, Asn-256, Asn-285, Asn-289, Asn-295, Asn-312, Asn-332, Asn-340, Asn-402, and Asn-419. LRR repeat units lie at residues 412–435, 436–458, and 460–481; these read RIIS…SKLT, LLTV…FAEM, and SLKL…PDSL. N-linked (GlcNAc...) asparagine glycans are attached at residues Asn-465, Asn-473, and Asn-497. A helical membrane pass occupies residues 514 to 534; that stretch reads IAASVAGVFALLVILAIFFVI. Over 535–890 the chain is Cytoplasmic; it reads KRKNVKAHKS…STSDFAPGAR (356 aa). A Phosphothreonine modification is found at Thr-575. The Protein kinase domain occupies 584 to 856; sequence NNFERVLGKG…HVVMELNDCV (273 aa). Residues 590–598 and Lys-611 each bind ATP; that span reads LGKGGFGTV. Residue Tyr-656 is modified to Phosphotyrosine. Residue Asp-708 is the Proton acceptor of the active site. A Phosphoserine modification is found at Ser-742. 2 positions are modified to phosphothreonine: Thr-743 and Thr-748. Tyr-756 carries the post-translational modification Phosphotyrosine.

This sequence belongs to the protein kinase superfamily. Ser/Thr protein kinase family.

Its subcellular location is the membrane. It carries out the reaction L-seryl-[protein] + ATP = O-phospho-L-seryl-[protein] + ADP + H(+). The catalysed reaction is L-threonyl-[protein] + ATP = O-phospho-L-threonyl-[protein] + ADP + H(+). In Arabidopsis thaliana (Mouse-ear cress), this protein is Probable LRR receptor-like serine/threonine-protein kinase At1g51860.